A 1006-amino-acid chain; its full sequence is Transmembrane channel-like protein 5 (1006 aa).

Residues 1–289 (MSAYYRNNWS…DDPVGSLWGE (289 aa)) are disordered. Residues 1–458 (MSAYYRNNWS…YFNFLRWLLK (458 aa)) are Extracellular-facing. Polar residues-rich tracts occupy residues 20-30 (SGSQNRTQGYL), 50-59 (TRSNPYSVAS), and 76-101 (RSLSNPDYSGTRSNAYSAASRTSPDH). The span at 138 to 149 (AGSSSSGNYAGS) shows a compositional bias: low complexity. The segment covering 239 to 250 (REPDYSDAENGH) has biased composition (basic and acidic residues). A helical transmembrane segment spans residues 459–479 (FNIFSFILNFSFIIIPQFTVA). The Cytoplasmic portion of the chain corresponds to 480 to 485 (KKNTLQ). The chain crosses the membrane as a helical span at residues 486-508 (FTGLEFFTGVGYFRDTVMYYGFY). At 509–525 (TNSTIQHGNSGASYNMQ) the chain is on the extracellular side. The helical transmembrane segment at 526–546 (LAYIFTIGACLTTCFFSLLFS) threads the bilayer. At 547–619 (MAKYFRNNFI…NQLLTRFSAY (73 aa)) the chain is on the cytoplasmic side. The chain crosses the membrane as a helical span at residues 620–640 (MVAWVVSTGVAIACCAAVYYL). Topologically, residues 641-654 (AEYNLEFLKTHSNP) are extracellular. Residues 655 to 675 (GAVLLLPFVVSCINLAVPCIY) form a helical membrane-spanning segment. At 676 to 698 (SMFRLVERYEMPRHEVYVLLIRN) the chain is on the cytoplasmic side. Residues 699-719 (IFLKISIIGILCYYWLNTVAL) traverse the membrane as a helical segment. Residues 720 to 732 (SGEECWETLIGQD) lie on the Extracellular side of the membrane. Residues 733–753 (IYRLLLMDFVFSLVNSFLGEF) form a helical membrane-spanning segment. Topologically, residues 754-786 (LRRIIGMQLITSLGLQEFDIARNVLELIYAQTL) are cytoplasmic. The chain crosses the membrane as a helical span at residues 787–807 (VWIGIFFCPLLPFIQMIMLFI). Topologically, residues 808–835 (MFYSKNISLMMNFQPPSKAWRASQMMTF) are extracellular. A helical transmembrane segment spans residues 836–856 (FIFLLFFPSFTGVLCTLAITI). Residues 857 to 900 (WRLKPSADCGPFRGLPLFIHSIYSWIDTLSTRPGYLWVVWIYRN) lie on the Cytoplasmic side of the membrane. Residues 901 to 921 (LIGSVHFFFILTLIVLIITYL) form a helical membrane-spanning segment. Over 922-1006 (YWQITEGRKI…RSVQEGNPRA (85 aa)) the chain is Extracellular.

This sequence belongs to the TMC family.

It localises to the membrane. Functionally, probable component of an ion channel. Molecular function hasn't been characterized yet. This Homo sapiens (Human) protein is Transmembrane channel-like protein 5.